Consider the following 419-residue polypeptide: Serine--tRNA ligase (419 aa).

L-serine is bound at residue 226–228; that stretch reads TSE. ATP contacts are provided by residues 257 to 259 and V273; that span reads RRE. L-serine is bound at residue E280. Residue 344–347 participates in ATP binding; sequence ELTS. L-serine is bound at residue T379.

The protein belongs to the class-II aminoacyl-tRNA synthetase family. Type-1 seryl-tRNA synthetase subfamily. In terms of assembly, homodimer. The tRNA molecule binds across the dimer.

The protein resides in the cytoplasm. It carries out the reaction tRNA(Ser) + L-serine + ATP = L-seryl-tRNA(Ser) + AMP + diphosphate + H(+). The enzyme catalyses tRNA(Sec) + L-serine + ATP = L-seryl-tRNA(Sec) + AMP + diphosphate + H(+). It functions in the pathway aminoacyl-tRNA biosynthesis; selenocysteinyl-tRNA(Sec) biosynthesis; L-seryl-tRNA(Sec) from L-serine and tRNA(Sec): step 1/1. Functionally, catalyzes the attachment of serine to tRNA(Ser). Is also able to aminoacylate tRNA(Sec) with serine, to form the misacylated tRNA L-seryl-tRNA(Sec), which will be further converted into selenocysteinyl-tRNA(Sec). This Mycolicibacterium vanbaalenii (strain DSM 7251 / JCM 13017 / BCRC 16820 / KCTC 9966 / NRRL B-24157 / PYR-1) (Mycobacterium vanbaalenii) protein is Serine--tRNA ligase.